Here is a 419-residue protein sequence, read N- to C-terminus: UDP-N-acetylglucosamine 1-carboxyvinyltransferase (419 aa).

22–23 (KN) serves as a coordination point for phosphoenolpyruvate. R91 contributes to the UDP-N-acetyl-alpha-D-glucosamine binding site. C115 (proton donor) is an active-site residue. The residue at position 115 (C115) is a 2-(S-cysteinyl)pyruvic acid O-phosphothioketal. Residues 120 to 124 (RPVDL), 160 to 163 (KVSV), D305, and V327 each bind UDP-N-acetyl-alpha-D-glucosamine.

The protein belongs to the EPSP synthase family. MurA subfamily.

It localises to the cytoplasm. The catalysed reaction is phosphoenolpyruvate + UDP-N-acetyl-alpha-D-glucosamine = UDP-N-acetyl-3-O-(1-carboxyvinyl)-alpha-D-glucosamine + phosphate. It functions in the pathway cell wall biogenesis; peptidoglycan biosynthesis. Its function is as follows. Cell wall formation. Adds enolpyruvyl to UDP-N-acetylglucosamine. The sequence is that of UDP-N-acetylglucosamine 1-carboxyvinyltransferase from Salmonella schwarzengrund (strain CVM19633).